A 508-amino-acid polypeptide reads, in one-letter code: Lysine--tRNA ligase (508 aa).

Residues glutamate 418 and glutamate 425 each coordinate Mg(2+).

Belongs to the class-II aminoacyl-tRNA synthetase family. In terms of assembly, homodimer. Mg(2+) is required as a cofactor.

It localises to the cytoplasm. The enzyme catalyses tRNA(Lys) + L-lysine + ATP = L-lysyl-tRNA(Lys) + AMP + diphosphate. In Burkholderia ambifaria (strain MC40-6), this protein is Lysine--tRNA ligase.